The sequence spans 429 residues: Putative protease Do-like 14 (429 aa).

The tract at residues 87-113 (KSEAPINDEKGVSVEASDSSSKPSNGY) is disordered. Residues 113–338 (YLGRDTIANA…IRPWIGLKMV (226 aa)) are serine protease. Catalysis depends on charge relay system residues H165, D203, and S281. The region spanning 318–424 (IIEHFKKSGR…RVTLEVIPEE (107 aa)) is the PDZ domain.

It belongs to the peptidase S1C family.

Its function is as follows. Putative serine protease. The sequence is that of Putative protease Do-like 14 (DEGP14) from Arabidopsis thaliana (Mouse-ear cress).